We begin with the raw amino-acid sequence, 281 residues long: Fructose-bisphosphate aldolase class 1 (281 aa).

The Schiff-base intermediate with dihydroxyacetone-P role is filled by Lys191.

The protein belongs to the DeoC/FbaB aldolase family. As to quaternary structure, homooctamer.

It localises to the cytoplasm. It carries out the reaction beta-D-fructose 1,6-bisphosphate = D-glyceraldehyde 3-phosphate + dihydroxyacetone phosphate. With respect to regulation, activated by citrate. In Pyrococcus furiosus (strain ATCC 43587 / DSM 3638 / JCM 8422 / Vc1), this protein is Fructose-bisphosphate aldolase class 1 (fba).